The sequence spans 347 residues: Phosphate acyltransferase (347 aa).

It belongs to the PlsX family. Homodimer. Probably interacts with PlsY.

It localises to the cytoplasm. The catalysed reaction is a fatty acyl-[ACP] + phosphate = an acyl phosphate + holo-[ACP]. It participates in lipid metabolism; phospholipid metabolism. Functionally, catalyzes the reversible formation of acyl-phosphate (acyl-PO(4)) from acyl-[acyl-carrier-protein] (acyl-ACP). This enzyme utilizes acyl-ACP as fatty acyl donor, but not acyl-CoA. The chain is Phosphate acyltransferase from Syntrophotalea carbinolica (strain DSM 2380 / NBRC 103641 / GraBd1) (Pelobacter carbinolicus).